The sequence spans 79 residues: Cell division protein ZapB (79 aa).

Positions 3 to 79 form a coiled coil; sequence LEVFEKLEAK…QALLGRMEEV (77 aa). Lys-8 is subject to N6-acetyllysine. Residues 34-65 form a disordered region; sequence NNSLSQEVQNAQHQREELERENNHLKEQQNGW. Positions 35 to 45 are enriched in polar residues; that stretch reads NSLSQEVQNAQ. Residues 46–60 are compositionally biased toward basic and acidic residues; the sequence is HQREELERENNHLKE.

It belongs to the ZapB family. Homodimer. The ends of the coiled-coil dimer bind to each other, forming polymers. Interacts with FtsZ.

It is found in the cytoplasm. Non-essential, abundant cell division factor that is required for proper Z-ring formation. It is recruited early to the divisome by direct interaction with FtsZ, stimulating Z-ring assembly and thereby promoting cell division earlier in the cell cycle. Its recruitment to the Z-ring requires functional FtsA or ZipA. This is Cell division protein ZapB from Shigella boydii serotype 18 (strain CDC 3083-94 / BS512).